We begin with the raw amino-acid sequence, 357 residues long: Cinnamyl alcohol dehydrogenase 5 (357 aa).

A Zn(2+)-binding site is contributed by cysteine 47. Threonine 49 serves as a coordination point for NADP(+). Zn(2+) contacts are provided by histidine 69, glutamate 70, cysteine 100, cysteine 103, cysteine 106, cysteine 114, and cysteine 163. Residues threonine 167, glycine 188–glycine 193, serine 211–lysine 216, threonine 251, glycine 275, and serine 298–isoleucine 300 each bind NADP(+).

This sequence belongs to the zinc-containing alcohol dehydrogenase family. As to quaternary structure, homodimer. Zn(2+) serves as cofactor. As to expression, expressed at the lateral root initiation sites, in the vascular tissues of the primary lateral root and the root caps. Expressed in the hypocotyl, cotyledon and leaf veins, apical meristem region, at the base of the trichomes, hydathodes and cauline leaves. In stems, expressed in the cells associated with the vascular cambium, interfascicular cambium and the developing xylem. Expressed in the vascular strand of petals and sepals, anthers, stamen filaments, stigma in flowers, and abscission, style and stigmatic regions of siliques.

The catalysed reaction is (E)-cinnamyl alcohol + NADP(+) = (E)-cinnamaldehyde + NADPH + H(+). It catalyses the reaction (E)-coniferol + NADP(+) = (E)-coniferaldehyde + NADPH + H(+). The enzyme catalyses (E)-sinapyl alcohol + NADP(+) = (E)-sinapaldehyde + NADPH + H(+). It carries out the reaction (E)-4-coumaroyl alcohol + NADP(+) = (E)-4-coumaraldehyde + NADPH + H(+). The catalysed reaction is (E)-caffeyl alcohol + NADP(+) = (E)-caffeyl aldehyde + NADPH + H(+). It participates in aromatic compound metabolism; phenylpropanoid biosynthesis. Functionally, involved in lignin biosynthesis in the floral stem. Catalyzes the final step specific for the production of lignin monomers. Catalyzes the NADPH-dependent reduction of coniferaldehyde, 5-hydroxyconiferaldehyde, sinapaldehyde, 4-coumaraldehyde and caffeyl aldehyde to their respective alcohols. The polypeptide is Cinnamyl alcohol dehydrogenase 5 (Arabidopsis thaliana (Mouse-ear cress)).